The sequence spans 405 residues: Mucosal addressin cell adhesion molecule 1 (405 aa).

The first 21 residues, 1–21, serve as a signal peptide directing secretion; it reads MESILALLLALALVPYQLSRG. Ig-like domains lie at 22–109 and 110–227; these read QSFQ…ILVY and AFPD…TSPK. At 22 to 364 the chain is on the extracellular side; the sequence is QSFQVNPPES…PGQVTPNSSS (343 aa). Disulfide bonds link Cys45-Cys91, Cys49-Cys95, and Cys132-Cys200. The interval 221-257 is mucin-like; the sequence is QSQTSPKPPNTTSAEPYILTSSSTAEAVSTGLNITTL. N-linked (GlcNAc...) asparagine glycosylation is found at Asn230 and Asn253. Residues 255–275 are disordered; that stretch reads TTLPSAPPYPKLSPRTLSSEG. An Ig-like 3 domain is found at 258-357; sequence PSAPPYPKLS…EVTNLYVPGQ (100 aa). Cysteines 293 and 341 form a disulfide. N-linked (GlcNAc...) asparagine glycosylation is present at Asn361. A helical transmembrane segment spans residues 365–385; sequence TVVLWIGSLVLGLLALVFLAY. The Cytoplasmic segment spans residues 386–405; the sequence is RLWKCYRPGPRPDTSSCTHL.

In terms of assembly, homodimer. O-glycosylated; contains syalic acid. The Ser/Thr-rich mucin-like domain may provide possible sites for O-glycosylation. Highly expressed on high endothelial venules (HEV) of organized intestinal lymphoid tissues like the Peyer patches and mesenteric lymph nodes, and in the lamina propria of the intestine. Some expression found in the spleen, and low levels of expression in the peripheral lymph nodes and the lactating mammary gland. No expression was detected in the liver, kidneys, lungs or in normal brain. Expressed as well in brain endothelioma cells, and mucosal tissues which are in a chronic state of inflammation, such as inflamed pancreas.

It is found in the membrane. Cell adhesion leukocyte receptor expressed by mucosal venules, helps to direct lymphocyte traffic into mucosal tissues including the Peyer patches and the intestinal lamina propria. It can bind both the integrin alpha-4/beta-7 and L-selectin, regulating both the passage and retention of leukocytes. Both isoform 1 and isoform 2 can adhere to integrin alpha-4/beta-7. Isoform 2, lacking the mucin-like domain, may be specialized in supporting integrin alpha-4/beta-7-dependent adhesion strengthening, independent of L-selectin binding. This is Mucosal addressin cell adhesion molecule 1 (Madcam1) from Mus musculus (Mouse).